The chain runs to 469 residues: ATP sulfurylase 4, chloroplastic (469 aa).

A chloroplast-targeting transit peptide spans 1 to 51 (MASSAAAIVSGSPFRSSPLIHNHHASRYAPGSISVVSLPRQVSRRGLSVKS).

The protein belongs to the sulfate adenylyltransferase family. In terms of assembly, homotetramer. Expressed in roots and leaves.

The protein localises to the plastid. It localises to the chloroplast stroma. It catalyses the reaction sulfate + ATP + H(+) = adenosine 5'-phosphosulfate + diphosphate. It functions in the pathway sulfur metabolism; hydrogen sulfide biosynthesis; sulfite from sulfate: step 1/3. In terms of biological role, sulfate adenylyltransferase. Catalyzes the first step of the sulfate assimilation pathway. The sequence is that of ATP sulfurylase 4, chloroplastic (APS4) from Arabidopsis thaliana (Mouse-ear cress).